Consider the following 335-residue polypeptide: Tetraacyldisaccharide 4'-kinase (335 aa).

Residue T58–T65 coordinates ATP.

Belongs to the LpxK family.

The enzyme catalyses a lipid A disaccharide + ATP = a lipid IVA + ADP + H(+). It participates in glycolipid biosynthesis; lipid IV(A) biosynthesis; lipid IV(A) from (3R)-3-hydroxytetradecanoyl-[acyl-carrier-protein] and UDP-N-acetyl-alpha-D-glucosamine: step 6/6. Functionally, transfers the gamma-phosphate of ATP to the 4'-position of a tetraacyldisaccharide 1-phosphate intermediate (termed DS-1-P) to form tetraacyldisaccharide 1,4'-bis-phosphate (lipid IVA). This Caulobacter vibrioides (strain ATCC 19089 / CIP 103742 / CB 15) (Caulobacter crescentus) protein is Tetraacyldisaccharide 4'-kinase.